The primary structure comprises 575 residues: DNA mismatch repair protein MutL (575 aa).

It belongs to the DNA mismatch repair MutL/HexB family.

This protein is involved in the repair of mismatches in DNA. It is required for dam-dependent methyl-directed DNA mismatch repair. May act as a 'molecular matchmaker', a protein that promotes the formation of a stable complex between two or more DNA-binding proteins in an ATP-dependent manner without itself being part of a final effector complex. The polypeptide is DNA mismatch repair protein MutL (Coxiella burnetii (strain CbuG_Q212) (Coxiella burnetii (strain Q212))).